The primary structure comprises 487 residues: 3-octaprenyl-4-hydroxybenzoate carboxy-lyase (487 aa).

Asn172 provides a ligand contact to Mn(2+). Prenylated FMN is bound by residues 175 to 177 (IYR), 189 to 191 (RWL), and 194 to 195 (RG). Residue Glu238 coordinates Mn(2+). Residue Asp287 is the Proton donor of the active site.

This sequence belongs to the UbiD family. In terms of assembly, homohexamer. Prenylated FMN is required as a cofactor. It depends on Mn(2+) as a cofactor.

It is found in the cell membrane. The enzyme catalyses a 4-hydroxy-3-(all-trans-polyprenyl)benzoate + H(+) = a 2-(all-trans-polyprenyl)phenol + CO2. It participates in cofactor biosynthesis; ubiquinone biosynthesis. In terms of biological role, catalyzes the decarboxylation of 3-octaprenyl-4-hydroxy benzoate to 2-octaprenylphenol, an intermediate step in ubiquinone biosynthesis. This Thiobacillus denitrificans (strain ATCC 25259 / T1) protein is 3-octaprenyl-4-hydroxybenzoate carboxy-lyase.